A 645-amino-acid polypeptide reads, in one-letter code: DNA mismatch repair protein MutL (645 aa).

It belongs to the DNA mismatch repair MutL/HexB family.

Its function is as follows. This protein is involved in the repair of mismatches in DNA. It is required for dam-dependent methyl-directed DNA mismatch repair. May act as a 'molecular matchmaker', a protein that promotes the formation of a stable complex between two or more DNA-binding proteins in an ATP-dependent manner without itself being part of a final effector complex. In Pediococcus pentosaceus (strain ATCC 25745 / CCUG 21536 / LMG 10740 / 183-1w), this protein is DNA mismatch repair protein MutL.